A 450-amino-acid chain; its full sequence is Bicarbonate-binding protein CmpA (450 aa).

The segment at residues 1–36 (MNEFQPVNRRQFLFTLGATAASAILLKGCGNPPSSS) is a signal peptide (tat-type signal).

Belongs to the CmpA/NrtA family. In terms of assembly, the complex is composed of two ATP-binding proteins (CmpC and CmpD), a transmembrane protein (CmpB) and a solute-binding protein (CmpA). In terms of processing, predicted to be exported by the Tat system. The position of the signal peptide cleavage has not been experimentally proven. The N-terminus is blocked.

It is found in the cell inner membrane. Functionally, part of the ABC transporter complex CmpABCD involved in bicarbonate transport. Binds bicarbonate with high affinity. In Synechococcus elongatus (strain ATCC 33912 / PCC 7942 / FACHB-805) (Anacystis nidulans R2), this protein is Bicarbonate-binding protein CmpA (cmpA).